The sequence spans 268 residues: Tropinone reductase homolog At2g29170 (268 aa).

Position 22–46 (leucine 22–histidine 46) interacts with NADP(+). Serine 155 is a substrate binding site. Residue tyrosine 168 is the Proton acceptor of the active site.

It belongs to the short-chain dehydrogenases/reductases (SDR) family. SDR65C subfamily.

The chain is Tropinone reductase homolog At2g29170 from Arabidopsis thaliana (Mouse-ear cress).